Consider the following 255-residue polypeptide: Ribonuclease PH (255 aa).

Residues R86 and 124 to 126 contribute to the phosphate site; that span reads GTR.

This sequence belongs to the RNase PH family. As to quaternary structure, homohexameric ring arranged as a trimer of dimers.

It carries out the reaction tRNA(n+1) + phosphate = tRNA(n) + a ribonucleoside 5'-diphosphate. In terms of biological role, phosphorolytic 3'-5' exoribonuclease that plays an important role in tRNA 3'-end maturation. Removes nucleotide residues following the 3'-CCA terminus of tRNAs; can also add nucleotides to the ends of RNA molecules by using nucleoside diphosphates as substrates, but this may not be physiologically important. Probably plays a role in initiation of 16S rRNA degradation (leading to ribosome degradation) during starvation. This is Ribonuclease PH from Geobacillus sp. (strain WCH70).